A 136-amino-acid polypeptide reads, in one-letter code: Cytochrome c oxidase subunit 13, mitochondrial (136 aa).

A mitochondrion-targeting transit peptide spans 1-29 (MFAQRQMFFARLAANLRAPAVRQTVQRRF). The Mitochondrial matrix segment spans residues 30–62 (ASTPANESGKNAFVREREAVKQHAAETTELWRK). A helical transmembrane segment spans residues 63 to 83 (ISLYGIPPALALAGYNAYTLY). Over 84-136 (NEHWEHWSHLPPLEERTEYPYQNIRTRNYPWGDGDKTLFWNESVNYHNRDKVT) the chain is Mitochondrial intermembrane.

Belongs to the cytochrome c oxidase subunit 6A family. As to quaternary structure, component of the cytochrome c oxidase (complex IV, CIV), a multisubunit enzyme composed of 11 subunits. The complex is composed of a catalytic core of 3 subunits Cox1, Cox2 and Cox3, encoded in the mitochondrial DNA, and 8 supernumerary subunits Cox4, Cox5a/Cox5, Cox6, Cox7, Cox8, Cox7a/Cox9, Cox6b/Cox12 and Cox6a/Cox13, which are encoded in the nuclear genome. The complex exists as a monomer or a dimer and forms respiratory supercomplexes (SCs) in the inner mitochondrial membrane with NADH-ubiquinone oxidoreductase (complex I, CI) and ubiquinol-cytochrome c oxidoreductase (cytochrome b-c1 complex, complex III, CIII), resulting in various different assemblies (supercomplexes I(1)IV(1), I(1)III(3)IV(2), III(2)IV(1) and III(2)IV(2) as well as larger supercomplexes of compositions like I(1)III(2)IV(5-6)). Cox6a/Cox13 was not present in the cryo-EM structure. It may be involved in complex IV dimer formation and might not be always expressed. This would explain its absence in the map of the isolated monomer.

The protein resides in the mitochondrion inner membrane. It functions in the pathway energy metabolism; oxidative phosphorylation. In terms of biological role, component of the cytochrome c oxidase, the last enzyme in the mitochondrial electron transport chain which drives oxidative phosphorylation. The respiratory chain contains 3 multisubunit complexes succinate dehydrogenase (complex II, CII), ubiquinol-cytochrome c oxidoreductase (cytochrome b-c1 complex, complex III, CIII) and cytochrome c oxidase (complex IV, CIV), that cooperate to transfer electrons derived from NADH and succinate to molecular oxygen, creating an electrochemical gradient over the inner membrane that drives transmembrane transport and the ATP synthase. Cytochrome c oxidase is the component of the respiratory chain that catalyzes the reduction of oxygen to water. Electrons originating from reduced cytochrome c in the intermembrane space (IMS) are transferred via the dinuclear copper A center (CU(A)) of Cox2 and heme A of Cox1 to the active site in Cox1, a binuclear center (BNC) formed by heme A3 and copper B (CU(B)). The BNC reduces molecular oxygen to 2 water molecules using 4 electrons from cytochrome c in the IMS and 4 protons from the mitochondrial matrix. The chain is Cytochrome c oxidase subunit 13, mitochondrial (eat-5) from Neurospora crassa (strain ATCC 24698 / 74-OR23-1A / CBS 708.71 / DSM 1257 / FGSC 987).